A 339-amino-acid polypeptide reads, in one-letter code: Centromere protein N (339 aa).

A phosphoserine mark is found at serine 226 and serine 235.

This sequence belongs to the CENP-N/CHL4 family. As to quaternary structure, component of the CENPA-NAC complex, at least composed of CENPA, CENPC, CENPH, CENPM, CENPN, CENPT and CENPU. The CENPA-NAC complex interacts with the CENPA-CAD complex, composed of CENPI, CENPK, CENPL, CENPO, CENPP, CENPQ, CENPR and CENPS. Interacts directly with CENPA. Identified in a centromere complex containing histones H2A, H2B and H4, and at least CENPA, CENPB, CENPC, CENPT, CENPN, HJURP, SUPT16H, SSRP1 and RSF1.

It is found in the nucleus. The protein localises to the chromosome. Its subcellular location is the centromere. The protein resides in the kinetochore. Functionally, component of the CENPA-NAC (nucleosome-associated) complex, a complex that plays a central role in assembly of kinetochore proteins, mitotic progression and chromosome segregation. The CENPA-NAC complex recruits the CENPA-CAD (nucleosome distal) complex and may be involved in incorporation of newly synthesized CENPA into centromeres. CENPN is the first protein to bind specifically to CENPA nucleosomes and the direct binding of CENPA nucleosomes by CENPN is required for centromere assembly. Required for chromosome congression and efficiently align the chromosomes on a metaphase plate. This is Centromere protein N (CENPN) from Bos taurus (Bovine).